Consider the following 271-residue polypeptide: Isoprenyl transferase (271 aa).

The active site involves Asp35. Residue Asp35 participates in Mg(2+) binding. Residues 36-39 (GNGR), Trp40, Arg48, His52, and 80-82 (STE) contribute to the substrate site. The Proton acceptor role is filled by Asn83. Substrate contacts are provided by residues Trp84, Arg86, Arg207, and 213–215 (RIS). Glu226 serves as a coordination point for Mg(2+).

It belongs to the UPP synthase family. Homodimer. Mg(2+) is required as a cofactor.

Functionally, catalyzes the condensation of isopentenyl diphosphate (IPP) with allylic pyrophosphates generating different type of terpenoids. This Enterococcus faecalis (strain ATCC 700802 / V583) protein is Isoprenyl transferase.